We begin with the raw amino-acid sequence, 375 residues long: Chaperone protein DnaJ (375 aa).

In terms of domain architecture, J spans 5 to 70 (DFYEVLGVEK…QKRAQYDQFG (66 aa)). The segment at 134–216 (GVEKEVSITK…CKGKGTVRKQ (83 aa)) adopts a CR-type zinc-finger fold. 8 residues coordinate Zn(2+): Cys147, Cys150, Cys164, Cys167, Cys190, Cys193, Cys204, and Cys207. 4 CXXCXGXG motif repeats span residues 147-154 (CETCTGTG), 164-171 (CPKCNGSG), 190-197 (CDMCGGKG), and 204-211 (CSDCKGKG).

Belongs to the DnaJ family. As to quaternary structure, homodimer. Zn(2+) serves as cofactor.

Its subcellular location is the cytoplasm. Participates actively in the response to hyperosmotic and heat shock by preventing the aggregation of stress-denatured proteins and by disaggregating proteins, also in an autonomous, DnaK-independent fashion. Unfolded proteins bind initially to DnaJ; upon interaction with the DnaJ-bound protein, DnaK hydrolyzes its bound ATP, resulting in the formation of a stable complex. GrpE releases ADP from DnaK; ATP binding to DnaK triggers the release of the substrate protein, thus completing the reaction cycle. Several rounds of ATP-dependent interactions between DnaJ, DnaK and GrpE are required for fully efficient folding. Also involved, together with DnaK and GrpE, in the DNA replication of plasmids through activation of initiation proteins. This is Chaperone protein DnaJ from Clostridium tetani (strain Massachusetts / E88).